A 68-amino-acid chain; its full sequence is Disintegrin EMS11A (68 aa).

The Disintegrin domain maps to 1–65 (NSAHPCCDPV…DCPRNRYKGK (65 aa)). Cystine bridges form between cysteine 6–cysteine 29, cysteine 20–cysteine 26, cysteine 25–cysteine 50, and cysteine 38–cysteine 57. The Cell attachment site; atypical (MLD) signature appears at 42–44 (MLD).

It belongs to the disintegrin family. Dimeric disintegrin subfamily. As to quaternary structure, heterodimer; disulfide-linked. As to expression, expressed by the venom gland.

Its subcellular location is the secreted. Poor inhibitor of platelet aggregation. The disintegrin inhibits the adhesion of both the alpha-4/beta-1 (ITGA4/ITGB1) and the alpha-5/beta-1 (ITGA5/ITGB1) integrins to VCAM-1 and fibronectin respectively with almost the same degree of specificity. Inhibition on alpha-IIb/beta-3 (ITGA2B/ITGB3) is low. The chain is Disintegrin EMS11A from Echis multisquamatus (Central Asian sand viper).